Reading from the N-terminus, the 384-residue chain is Guanine nucleotide-binding protein alpha-1 subunit (384 aa).

A disordered region spans residues M1–T22. G2 is lipidated: N-myristoyl glycine. Residue C5 is the site of S-palmitoyl cysteine attachment. The region spanning H38–L384 is the G-alpha domain. The G1 motif stretch occupies residues K41–T54. Residues D49, S50, G51, K52, S53, T54, D163, L188, T194, G222, N288, K289, D291, and A356 each contribute to the GTP site. Residue S53 participates in Mg(2+) binding. Residues D186 to T194 form a G2 motif region. T194 contributes to the Mg(2+) binding site. Residues Y215 to R224 form a G3 motif region. A G4 motif region spans residues M284–D291. The segment at T354 to Q359 is G5 motif.

It belongs to the G-alpha family. G proteins are composed of 3 units; alpha, beta and gamma. The alpha chain contains the guanine nucleotide binding site. Mg(2+) is required as a cofactor.

Functionally, guanine nucleotide-binding proteins (G proteins) are involved as modulators or transducers in various transmembrane signaling systems. This is Guanine nucleotide-binding protein alpha-1 subunit (GPA1) from Solanum tuberosum (Potato).